We begin with the raw amino-acid sequence, 57 residues long: uncharacterized protein (57 aa).

This is an uncharacterized protein from Dictyostelium discoideum (Social amoeba).